A 167-amino-acid polypeptide reads, in one-letter code: Small ribosomal subunit protein uS5 (167 aa).

Positions 11-74 constitute an S5 DRBM domain; the sequence is LQEKLIAVNR…EKARRAMINV (64 aa).

This sequence belongs to the universal ribosomal protein uS5 family. As to quaternary structure, part of the 30S ribosomal subunit. Contacts proteins S4 and S8.

With S4 and S12 plays an important role in translational accuracy. Functionally, located at the back of the 30S subunit body where it stabilizes the conformation of the head with respect to the body. The chain is Small ribosomal subunit protein uS5 from Serratia proteamaculans (strain 568).